A 171-amino-acid polypeptide reads, in one-letter code: AN1-type zinc finger protein 2A (171 aa).

2 AN1-type zinc fingers span residues 4–52 (PDLG…KKDV) and 94–142 (KVFT…SSAS). Zn(2+) is bound by residues cysteine 10, cysteine 15, cysteine 25, cysteine 28, cysteine 33, histidine 36, histidine 42, cysteine 44, cysteine 100, cysteine 105, cysteine 115, cysteine 118, cysteine 123, histidine 126, histidine 132, and cysteine 134. Residues 134–171 (CQAGSSSASRGRTSTSRAAEQKPSGVSWLAQRLRRTVK) are disordered. Positions 136 to 151 (AGSSSASRGRTSTSRA) are enriched in low complexity.

It localises to the cytoplasm. The protein localises to the nucleus. The protein is AN1-type zinc finger protein 2A (Zfand2a) of Mus musculus (Mouse).